The chain runs to 270 residues: MLAKRIIPCLDVKDGRVVKGVRFVGLRDAGDPVEAARRYDAEGADEITFLDITASHEKRGIILDVVARTAEVLFTPLTVGGGVKSEQDIKALLDAGADKVAINTAAVNDPDLVRRAADRWGAQAIVVAIDARRIADPSRVAWTVVTHGGRRDTGRDAVAWAEEIARAGAGELLVTSMDRDGTRDGYDLLLTAAIARAVPVPVIASGGVGTLDHLRAGLVEGGADAALAASIFHDAEYTIGEAKAYLEAAGVPVRPARAGGPGDAASRGRS.

Active-site residues include D11 and D130.

This sequence belongs to the HisA/HisF family. In terms of assembly, heterodimer of HisH and HisF.

The protein resides in the cytoplasm. It catalyses the reaction 5-[(5-phospho-1-deoxy-D-ribulos-1-ylimino)methylamino]-1-(5-phospho-beta-D-ribosyl)imidazole-4-carboxamide + L-glutamine = D-erythro-1-(imidazol-4-yl)glycerol 3-phosphate + 5-amino-1-(5-phospho-beta-D-ribosyl)imidazole-4-carboxamide + L-glutamate + H(+). The protein operates within amino-acid biosynthesis; L-histidine biosynthesis; L-histidine from 5-phospho-alpha-D-ribose 1-diphosphate: step 5/9. IGPS catalyzes the conversion of PRFAR and glutamine to IGP, AICAR and glutamate. The HisF subunit catalyzes the cyclization activity that produces IGP and AICAR from PRFAR using the ammonia provided by the HisH subunit. This chain is Imidazole glycerol phosphate synthase subunit HisF, found in Sorangium cellulosum (strain So ce56) (Polyangium cellulosum (strain So ce56)).